Here is a 456-residue protein sequence, read N- to C-terminus: Alcohol acyltransferase 16 (456 aa).

Residues His167 and Asp382 each act as proton acceptor in the active site.

Belongs to the plant acyltransferase family. Expressed in fruit.

The catalysed reaction is 3-(methylsulfanyl)propanoyl-CoA + butan-1-ol = butyl 3-(methylsulfanyl)propanoate + CoA. The enzyme catalyses ethanol + benzoyl-CoA = ethyl benzoate + CoA. It catalyses the reaction butan-1-ol + benzoyl-CoA = butyl benzoate + CoA. It carries out the reaction 2-(methylsulfanyl)acetyl-CoA + butan-1-ol = butyl 2-(methylsulfanyl)acetate + CoA. Functionally, involved in the biosynthesis of volatile esters which confer kiwifruit flavor. Alcohol acyl transferase that can use a wide range of alcohols as substrate to produce esters. Exhibits benzoyl-CoA:alcohol O-acyltransferase activity. In Actinidia chinensis var. chinensis (Chinese soft-hair kiwi), this protein is Alcohol acyltransferase 16.